Here is a 555-residue protein sequence, read N- to C-terminus: MAARLLLLGILLLLLPLPVPAPCHTAARSECKRSHKFVPGAWLAGEGVDVTSLRRSGSFPVDTQRFLRPDGTCTLCENALQEGTLQRLPLALTNWRAQGSGCQRHVTRAKVSSTEAVARDAARSIRNDWKVGLDVTPKPTSNVHVSVAGSHSQAANFAAQKTHQDQYSFSTDTVECRFYSFHVVHTPPLHPDFKRALGDLPHHFNASTQPAYLRLISNYGTHFIRAVELGGRISALTALRTCELALEGLTDNEVEDCLTVEAQVNIGIHGSISAEAKACEEKKKKHKMTASFHQTYRERHSEVVGGHHTSINDLLFGIQAGPEQYSAWVNSLPGSPGLVDYTLEPLHVLLDSQDPRREALRRALSQYLTDRARWRDCSRPCPPGRQKSPRDPCQCVCHGSAVTTQDCCPRQRGLAQLEVTFIQAWGLWGDWFTATDAYVKLFFGGQELRTSTVWDNNNPIWSVRLDFGDVLLATGGPLRLQVWDQDSGRDDDLLGTCDQAPKSGSHEVRCNLNHGHLKFRYHARCLPHLGGGTCLDYVPQMLLGEPPGNRSGAVW.

The first 21 residues, 1-21, serve as a signal peptide directing secretion; the sequence is MAARLLLLGILLLLLPLPVPA. Cystine bridges form between Cys23-Cys76, Cys31-Cys73, and Cys102-Cys176. One can recognise an MACPF domain in the interval 27–375; it reads ARSECKRSHK…QYLTDRARWR (349 aa). A beta stranded transmembrane segment spans residues 129-149; that stretch reads WKVGLDVTPKPTSNVHVSVAG. Residue Asn205 is glycosylated (N-linked (GlcNAc...) asparagine). 4 disulfide bridges follow: Cys242/Cys408, Cys377/Cys393, Cys381/Cys395, and Cys397/Cys407. Residues 257–279 form a beta stranded membrane-spanning segment; that stretch reads CLTVEAQVNIGIHGSISAEAKAC. Positions 376-408 constitute an EGF-like domain; the sequence is DCSRPCPPGRQKSPRDPCQCVCHGSAVTTQDCC. One can recognise a C2 domain in the interval 397-519; the sequence is CHGSAVTTQD…CNLNHGHLKF (123 aa). Positions 429, 430, 433, 434, 436, 484, 486, 490, 491, and 492 each coordinate Ca(2+). 2 disulfide bridges follow: Cys497-Cys510 and Cys525-Cys534. Asn549 carries an N-linked (GlcNAc...) asparagine glycan.

Belongs to the complement C6/C7/C8/C9 family. Monomer, as soluble protein. Homooligomer; homooligomerizes to form a pore-forming ring. It depends on Ca(2+) as a cofactor. N-glycosylated.

Its subcellular location is the cytolytic granule. The protein localises to the secreted. It localises to the cell membrane. The protein resides in the endosome lumen. In terms of biological role, pore-forming protein that plays a key role in granzyme-mediated programmed cell death, and in defense against virus-infected or neoplastic cells. Plays an important role in killing other cells that are recognized as non-self by the immune system, e.g. in transplant rejection or some forms of autoimmune disease. Can insert into the membrane of target cells in its calcium-bound form, oligomerize and form large pores. Promotes cytolysis and apoptosis of target cells by mediating the passage and uptake of cytotoxic granzymes. Facilitates the delivery of cationic cargo protein, while anionic or neural proteins are not delivered efficiently. Perforin pores allow the release of mature caspase-7 (CASP7) into the extracellular milieu. This is Perforin-1 (PRF1) from Homo sapiens (Human).